Consider the following 409-residue polypeptide: Peptidase T (409 aa).

Residue H78 participates in Zn(2+) binding. Residue D80 is part of the active site. Residue D140 participates in Zn(2+) binding. E174 (proton acceptor) is an active-site residue. Positions 175, 197, and 379 each coordinate Zn(2+).

The protein belongs to the peptidase M20B family. Requires Zn(2+) as cofactor.

It is found in the cytoplasm. The enzyme catalyses Release of the N-terminal residue from a tripeptide.. In terms of biological role, cleaves the N-terminal amino acid of tripeptides. In Photobacterium profundum (strain SS9), this protein is Peptidase T.